The following is a 317-amino-acid chain: Olfactory receptor 2B11 (317 aa).

Residues 1–29 are Extracellular-facing; that stretch reads MKSDNHSFLGDSPKAFILLGVSDRPWLEL. Asn-5 carries N-linked (GlcNAc...) asparagine glycosylation. A helical transmembrane segment spans residues 30–53; the sequence is PLFVVLLLSYVLAMLGNVAIILAS. The Cytoplasmic segment spans residues 54–61; that stretch reads RVDPQLHS. The helical transmembrane segment at 62-83 threads the bilayer; that stretch reads PMYIFLSHLSFLDLCYTTTTVP. Over 84 to 104 the chain is Extracellular; sequence QMLVNMGSSQKTISYGGCTVQ. A disulfide bridge connects residues Cys-101 and Cys-193. Residues 105–124 form a helical membrane-spanning segment; that stretch reads YAVFHWLGCTECIVLAAMAL. The Cytoplasmic segment spans residues 125 to 143; it reads DRYVAICKPLHYAVLMHRA. Residues 144–162 traverse the membrane as a helical segment; it reads LCQQLVALAWLSGFGNSFV. Residues 163-199 are Extracellular-facing; sequence QVVLTVQLPFCGRQVLNNFFCEVPAVIKLSCADTAVN. An N-linked (GlcNAc...) asparagine glycan is attached at Asn-199. The chain crosses the membrane as a helical span at residues 200–223; the sequence is DTILAVLVAFFVLVPLALILLSYG. Topologically, residues 224 to 240 are cytoplasmic; it reads FIARAVLRIQSSKGRHK. The helical transmembrane segment at 241 to 263 threads the bilayer; it reads AFGTCSSHLMIVSLFYLPAIYMY. The Extracellular portion of the chain corresponds to 264–276; that stretch reads LQPPSSYSQEQGK. Residues 277 to 296 form a helical membrane-spanning segment; that stretch reads FISLFYSIITPTLNPFTYTL. Residues 297 to 317 lie on the Cytoplasmic side of the membrane; the sequence is RNKDMKGALRRLLARIWRLCG.

Belongs to the G-protein coupled receptor 1 family.

It is found in the cell membrane. Its function is as follows. Odorant receptor. In Homo sapiens (Human), this protein is Olfactory receptor 2B11 (OR2B11).